Reading from the N-terminus, the 350-residue chain is Twinfilin-1 (350 aa).

ADF-H domains are found at residues 4–139 (QTGI…KYLA) and 177–313 (GIAF…EEVH). A disordered region spans residues 316–350 (QHAHKQNFAKPKGPAGKRGIRRLIRGPAEAETAND).

This sequence belongs to the actin-binding proteins ADF family. Twinfilin subfamily. As to quaternary structure, interacts with G-actin; ADP-actin form.

It localises to the cytoplasm. The protein resides in the cytoskeleton. Its function is as follows. Actin-binding protein involved in motile and morphological processes. Inhibits actin polymerization, likely by sequestering G-actin. The protein is Twinfilin-1 (twf1) of Xenopus tropicalis (Western clawed frog).